A 73-amino-acid polypeptide reads, in one-letter code: Beta-defensin 50 (73 aa).

Positions Met1–Ser23 are cleaved as a signal peptide. Intrachain disulfides connect Cys34–Cys63 and Cys46–Cys64.

The protein belongs to the beta-defensin family.

It localises to the secreted. Functionally, has bactericidal activity. The polypeptide is Beta-defensin 50 (Defb50) (Rattus norvegicus (Rat)).